A 260-amino-acid polypeptide reads, in one-letter code: MGQKIHPVGFRLGITQEHQSRWFAEPSRYPELLQEDHKLRQYIEQKLGRLAQNNAGISEVRIERKADQIDLEVRTARPGVVVGRGGQGIEALRTGLQTLLGGNRQIRINVVEVQRVDADAYLIAEFIAQQLERRVSFRRVVRQAIQRAQKAGIQGIKVQVSGRLNGAEIARTEWTREGRVPLHTLRADIDYSYCTAKTVYGILGIKVWVFKGEIIPGQEVATPPPSPRDRDRDRGDRDREPRRRQQQRRRQQFEDRSNEG.

Residues 39–114 (LRQYIEQKLG…QIRINVVEVQ (76 aa)) enclose the KH type-2 domain. The disordered stretch occupies residues 218 to 260 (QEVATPPPSPRDRDRDRGDRDREPRRRQQQRRRQQFEDRSNEG). 2 stretches are compositionally biased toward basic and acidic residues: residues 227 to 243 (PRDRDRDRGDRDREPRR) and 251 to 260 (QQFEDRSNEG).

This sequence belongs to the universal ribosomal protein uS3 family. As to quaternary structure, part of the 30S ribosomal subunit. Forms a tight complex with proteins S10 and S14.

Functionally, binds the lower part of the 30S subunit head. Binds mRNA in the 70S ribosome, positioning it for translation. The chain is Small ribosomal subunit protein uS3 from Nostoc sp. (strain PCC 7120 / SAG 25.82 / UTEX 2576).